The primary structure comprises 573 residues: Acyl-coenzyme A synthetase ACSM1, mitochondrial (573 aa).

Residues 1–35 constitute a mitochondrion transit peptide; that stretch reads MQWLKSFQICKVLQGFSLSPTQLHRRLFSRVGAPR. Lys-81 bears the N6-succinyllysine mark. Lys-142 bears the N6-acetyllysine; alternate mark. Lys-142 is subject to N6-succinyllysine; alternate. Lys-179 carries the N6-succinyllysine modification. N6-acetyllysine; alternate is present on Lys-200. Lys-200 carries the N6-succinyllysine; alternate modification. Lys-210 is modified (N6-acetyllysine). 222–230 is a binding site for ATP; the sequence is TSGTTGYPK. 2 positions are modified to N6-succinyllysine: Lys-233 and Lys-324. Lys-352 and Lys-387 each carry N6-acetyllysine; alternate. Lys-352 and Lys-387 each carry N6-succinyllysine; alternate. ATP-binding residues include Asp-448 and Arg-463. An N6-succinyllysine modification is found at Lys-501. Lys-527 carries the post-translational modification N6-acetyllysine. The residue at position 534 (Lys-534) is an N6-acetyllysine; alternate. Lys-534 is modified (N6-succinyllysine; alternate). Lys-545 is subject to N6-acetyllysine. Lys-559 lines the ATP pocket.

Belongs to the ATP-dependent AMP-binding enzyme family. As to quaternary structure, monomer. Requires Mg(2+) as cofactor. It depends on Mn(2+) as a cofactor. As to expression, highly expressed in liver and kidney.

The protein localises to the mitochondrion matrix. It localises to the mitochondrion. It carries out the reaction a medium-chain fatty acid + ATP + CoA = a medium-chain fatty acyl-CoA + AMP + diphosphate. It catalyses the reaction benzoate + ATP + CoA = benzoyl-CoA + AMP + diphosphate. The catalysed reaction is (R)-lipoate + GTP + H(+) = (R)-lipoyl-GMP + diphosphate. The enzyme catalyses octanoate + ATP + CoA = octanoyl-CoA + AMP + diphosphate. It carries out the reaction decanoate + ATP + CoA = decanoyl-CoA + AMP + diphosphate. It catalyses the reaction dodecanoate + ATP + CoA = dodecanoyl-CoA + AMP + diphosphate. The catalysed reaction is tetradecanoate + ATP + CoA = tetradecanoyl-CoA + AMP + diphosphate. The enzyme catalyses hexanoate + ATP + CoA = hexanoyl-CoA + AMP + diphosphate. It carries out the reaction butanoate + ATP + CoA = butanoyl-CoA + AMP + diphosphate. It catalyses the reaction hexadecanoate + ATP + CoA = hexadecanoyl-CoA + AMP + diphosphate. In terms of biological role, catalyzes the activation of fatty acids by CoA to produce an acyl-CoA, the first step in fatty acid metabolism. Capable of activating medium-chain fatty acids (e.g. butyric (C4) to decanoic (C10) acids), and certain carboxylate-containing xenobiotics, e.g. benzoate. Also catalyzes the activation of lipoate to lipoyl-nucleoside monophosphate. Activates lipoate with GTP at a 1000-fold higher rate than with ATP and activates both (R)- and (S)-lipoate to the respective lipoyl-GMP, with a preference for (R)-lipoate. The protein is Acyl-coenzyme A synthetase ACSM1, mitochondrial (Acsm1) of Mus musculus (Mouse).